The chain runs to 207 residues: Thiamine-phosphate synthase (207 aa).

4-amino-2-methyl-5-(diphosphooxymethyl)pyrimidine contacts are provided by residues 36-40 (QLRIK) and aspartate 68. Residues aspartate 69 and aspartate 88 each contribute to the Mg(2+) site. Position 106 (serine 106) interacts with 4-amino-2-methyl-5-(diphosphooxymethyl)pyrimidine. Residue 132–134 (TKT) coordinates 2-[(2R,5Z)-2-carboxy-4-methylthiazol-5(2H)-ylidene]ethyl phosphate. Residue lysine 135 coordinates 4-amino-2-methyl-5-(diphosphooxymethyl)pyrimidine. Residues glycine 162 and 182 to 183 (VS) contribute to the 2-[(2R,5Z)-2-carboxy-4-methylthiazol-5(2H)-ylidene]ethyl phosphate site.

The protein belongs to the thiamine-phosphate synthase family. Requires Mg(2+) as cofactor.

It carries out the reaction 2-[(2R,5Z)-2-carboxy-4-methylthiazol-5(2H)-ylidene]ethyl phosphate + 4-amino-2-methyl-5-(diphosphooxymethyl)pyrimidine + 2 H(+) = thiamine phosphate + CO2 + diphosphate. The enzyme catalyses 2-(2-carboxy-4-methylthiazol-5-yl)ethyl phosphate + 4-amino-2-methyl-5-(diphosphooxymethyl)pyrimidine + 2 H(+) = thiamine phosphate + CO2 + diphosphate. It catalyses the reaction 4-methyl-5-(2-phosphooxyethyl)-thiazole + 4-amino-2-methyl-5-(diphosphooxymethyl)pyrimidine + H(+) = thiamine phosphate + diphosphate. Its pathway is cofactor biosynthesis; thiamine diphosphate biosynthesis; thiamine phosphate from 4-amino-2-methyl-5-diphosphomethylpyrimidine and 4-methyl-5-(2-phosphoethyl)-thiazole: step 1/1. Its function is as follows. Condenses 4-methyl-5-(beta-hydroxyethyl)thiazole monophosphate (THZ-P) and 2-methyl-4-amino-5-hydroxymethyl pyrimidine pyrophosphate (HMP-PP) to form thiamine monophosphate (TMP). The polypeptide is Thiamine-phosphate synthase (Pyrococcus abyssi (strain GE5 / Orsay)).